A 413-amino-acid polypeptide reads, in one-letter code: Tubby-like F-box protein 6 (413 aa).

The 56-residue stretch at 67–122 folds into the F-box domain; the sequence is SIWVDLPPELLLDIIQRIESEQSLWPGRRDVVACASVCKSWREMTKEVVKVPELSG.

The protein belongs to the TUB family. In terms of tissue distribution, ubiquitous, with higher levels in flowers.

This Arabidopsis thaliana (Mouse-ear cress) protein is Tubby-like F-box protein 6.